The sequence spans 293 residues: Peptidoglycan deacetylase (293 aa).

Zn(2+) contacts are provided by Asp14, His86, and His90. The NodB homology domain occupies 29 to 276 (PDDISRGLFA…INKHEGVRWV (248 aa)).

It belongs to the polysaccharide deacetylase family. As to quaternary structure, homotetramer.

It catalyses the reaction Deacetylation of xylans and xylo-oligosaccharides.. Catalyzes the N-deacetylation of peptidoglycan (PG), an important mechanism that appears to confer lysozyme resistance and to mitigate host immune detection; this likely contributes to pathogen persistence in the host. The exact nature of the residue in PG that is deacetylated has not been determined. Is also able to catalyze the deacetylation of acetylated xylan, and, to a lesser extent, that of chitin and chitosan. Therefore, this enzyme might play a role during infection, considering that xylan-containing carbohydrate structures are among those commonly consumed by humans. This Helicobacter pylori (strain ATCC 700392 / 26695) (Campylobacter pylori) protein is Peptidoglycan deacetylase (pgdA).